A 136-amino-acid polypeptide reads, in one-letter code: Small ribosomal subunit protein uS8 (136 aa).

Belongs to the universal ribosomal protein uS8 family. In terms of assembly, part of the 30S ribosomal subunit. Contacts proteins S5 and S12.

Functionally, one of the primary rRNA binding proteins, it binds directly to 16S rRNA central domain where it helps coordinate assembly of the platform of the 30S subunit. The polypeptide is Small ribosomal subunit protein uS8 (Synechococcus sp. (strain JA-2-3B'a(2-13)) (Cyanobacteria bacterium Yellowstone B-Prime)).